The following is a 195-amino-acid chain: Nucleoside triphosphate pyrophosphatase (195 aa).

The active-site Proton acceptor is Asp-76.

The protein belongs to the Maf family. It depends on a divalent metal cation as a cofactor.

The protein localises to the cytoplasm. The enzyme catalyses a ribonucleoside 5'-triphosphate + H2O = a ribonucleoside 5'-phosphate + diphosphate + H(+). The catalysed reaction is a 2'-deoxyribonucleoside 5'-triphosphate + H2O = a 2'-deoxyribonucleoside 5'-phosphate + diphosphate + H(+). Nucleoside triphosphate pyrophosphatase. May have a dual role in cell division arrest and in preventing the incorporation of modified nucleotides into cellular nucleic acids. The protein is Nucleoside triphosphate pyrophosphatase of Pelagibacter ubique (strain HTCC1062).